We begin with the raw amino-acid sequence, 231 residues long: GrpE protein homolog, mitochondrial (231 aa).

Positions 49–71 (SEKAGEKAEEKAEEQNLSAEEQK) are disordered.

Belongs to the GrpE family. Component of the PAM complex, at least composed of mtHsp70, MGE1, TIM44, PAM16, PAM17 and PAM18.

Its subcellular location is the mitochondrion matrix. In terms of biological role, essential component of the PAM complex, a complex required for the translocation of transit peptide-containing proteins from the inner membrane into the mitochondrial matrix in an ATP-dependent manner. Seems to control the nucleotide-dependent binding of SSC1 to substrate proteins. This chain is GrpE protein homolog, mitochondrial (mge1), found in Candida glabrata (strain ATCC 2001 / BCRC 20586 / JCM 3761 / NBRC 0622 / NRRL Y-65 / CBS 138) (Yeast).